A 360-amino-acid chain; its full sequence is Phosphoserine aminotransferase (360 aa).

Residue arginine 42 participates in L-glutamate binding. Residues 76-77, tryptophan 102, threonine 152, aspartate 172, and glutamine 195 contribute to the pyridoxal 5'-phosphate site; that span reads AR. Residue lysine 196 is modified to N6-(pyridoxal phosphate)lysine. 237–238 serves as a coordination point for pyridoxal 5'-phosphate; that stretch reads NT.

Belongs to the class-V pyridoxal-phosphate-dependent aminotransferase family. SerC subfamily. In terms of assembly, homodimer. Pyridoxal 5'-phosphate serves as cofactor.

The protein resides in the cytoplasm. The enzyme catalyses O-phospho-L-serine + 2-oxoglutarate = 3-phosphooxypyruvate + L-glutamate. It carries out the reaction 4-(phosphooxy)-L-threonine + 2-oxoglutarate = (R)-3-hydroxy-2-oxo-4-phosphooxybutanoate + L-glutamate. It participates in amino-acid biosynthesis; L-serine biosynthesis; L-serine from 3-phospho-D-glycerate: step 2/3. Its pathway is cofactor biosynthesis; pyridoxine 5'-phosphate biosynthesis; pyridoxine 5'-phosphate from D-erythrose 4-phosphate: step 3/5. In terms of biological role, catalyzes the reversible conversion of 3-phosphohydroxypyruvate to phosphoserine and of 3-hydroxy-2-oxo-4-phosphonooxybutanoate to phosphohydroxythreonine. The polypeptide is Phosphoserine aminotransferase (Pasteurella multocida (strain Pm70)).